Here is a 499-residue protein sequence, read N- to C-terminus: Glycerol kinase (499 aa).

T17 serves as a coordination point for ADP. T17, T18, and S19 together coordinate ATP. T17 provides a ligand contact to sn-glycerol 3-phosphate. Residue R21 participates in ADP binding. Residues R87, E88, Y139, and D243 each contribute to the sn-glycerol 3-phosphate site. The glycerol site is built by R87, E88, Y139, D243, and Q244. T265 and G308 together coordinate ADP. T265, G308, Q312, and G409 together coordinate ATP. Residues G409 and N413 each coordinate ADP.

This sequence belongs to the FGGY kinase family.

The catalysed reaction is glycerol + ATP = sn-glycerol 3-phosphate + ADP + H(+). The protein operates within polyol metabolism; glycerol degradation via glycerol kinase pathway; sn-glycerol 3-phosphate from glycerol: step 1/1. Its activity is regulated as follows. Inhibited by fructose 1,6-bisphosphate (FBP). Key enzyme in the regulation of glycerol uptake and metabolism. Catalyzes the phosphorylation of glycerol to yield sn-glycerol 3-phosphate. The polypeptide is Glycerol kinase (Pseudomonas entomophila (strain L48)).